Here is a 270-residue protein sequence, read N- to C-terminus: uncharacterized protein (270 aa).

Positions 1–22 are cleaved as a signal peptide; that stretch reads MEYIKKIALYMSVLLLIIFIGG. Cys-23 carries N-palmitoyl cysteine lipidation. Cys-23 carries the S-diacylglycerol cysteine lipid modification.

This sequence belongs to the staphylococcal tandem lipoprotein family.

Its subcellular location is the cell membrane. This is an uncharacterized protein from Staphylococcus aureus (strain MW2).